The following is a 915-amino-acid chain: Probable inorganic carbon transporter subunit DabA (915 aa).

Residues cysteine 392, aspartate 394, histidine 566, and cysteine 581 each contribute to the Zn(2+) site.

Belongs to the inorganic carbon transporter (TC 9.A.2) DabA family. As to quaternary structure, forms a complex with DabB. Requires Zn(2+) as cofactor.

It localises to the cell inner membrane. Functionally, part of an energy-coupled inorganic carbon pump. The sequence is that of Probable inorganic carbon transporter subunit DabA from Nitrosospira multiformis (strain ATCC 25196 / NCIMB 11849 / C 71).